Reading from the N-terminus, the 533-residue chain is uncharacterized protein (533 aa).

The next 5 helical transmembrane spans lie at 4–23 (FLAANPLIALVVILAVGLAI), 28–47 (VFGLSLGAAAVLFVALVVST), 57–79 (IVYQLGLAMFVYVIGLSAGPAFF), 86–108 (GWKLTIFMLLLLATLIGLAWVLI), and 151–173 (VIGYSLAYPGAVLGSIVVAAVGA). The 85-residue stretch at 263-347 (LGEERETKIE…VAEVRRFLGD (85 aa)) folds into the RCK C-terminal domain. The next 4 membrane-spanning stretches (helical) occupy residues 352–374 (LADVNLLPLAIGLSLGLLLGAIP), 379–401 (GGTTMSLGFGGGPIIAGLILGAL), 422–444 (LGLALFLAGVGTSAGAGFRAALT), and 454–476 (GGLVITLASALLCAVIGMWVLRL).

It belongs to the AAE transporter (TC 2.A.81) family.

It localises to the cell membrane. This is an uncharacterized protein from Corynebacterium glutamicum (strain ATCC 13032 / DSM 20300 / JCM 1318 / BCRC 11384 / CCUG 27702 / LMG 3730 / NBRC 12168 / NCIMB 10025 / NRRL B-2784 / 534).